A 693-amino-acid polypeptide reads, in one-letter code: F-box protein MAX2 (693 aa).

Residues 3 to 50 (STTLSDLPDVILSTISSLVSDSRARNSLSLVSHKFLALERSTRSHLTI) enclose the F-box domain. 14 LRR repeats span residues 9–34 (LPDV…SLVS), 49–74 (TIRG…DLSF), 75–100 (LSPW…RLKF), 110–135 (VYTR…KLLR), 141–167 (SQIP…DLSN), 168–196 (FYHW…DLLT), 200–225 (TEGY…RVAC), 232–257 (FEFV…HMVD), 274–299 (DSAV…VLDV), 302–327 (DVKH…KLGQ), 332–356 (CSAT…SIKN), 357–382 (SGDL…EIQG), 383–409 (CENV…RISC), and 410–436 (CKNL…HIDC). The tract at residues 445-465 (EVEGRVETSEADHEEEDDGYE) is disordered. LRR repeat units lie at residues 480 to 505 (CSTS…SLWI), 508 to 532 (GEFL…RIKI), 541 to 565 (RPAE…QLDC), and 608 to 637 (DRDV…FIHG).

As to quaternary structure, part of a SCF (SKP1-cullin-F-box) protein ligase complex. Interacts with SKP1A/ASK1. Interacts with CUL1. Interacts with SMXL6, SMXL7 and SMXL8. Interacts with D14. Forms a complex with D14 and SKP1A/ASK1 in presence of strigolactone. As to expression, expressed in the vasculature of growing leaves and roots, rosette axillary bud, flowers, siliques, funiculi and stems.

It is found in the nucleus. The protein operates within protein modification; protein ubiquitination. Its function is as follows. Component of SCF(ASK-cullin-F-box) E3 ubiquitin ligase complexes, which may mediate the ubiquitination and subsequent proteasomal degradation of target proteins. Promotes the senescence. Is necessary for responses to strigolactones and karrikins. Contributes to the selective repression of axillary shoots and moderates the branching by regulating negatively the auxin transport in primary stems, in an AXR1-independent manner. Required for the progression of leaf senescence mediated by methyl jasmonate. Required at each node to suppress axillary bud growth. In Arabidopsis thaliana (Mouse-ear cress), this protein is F-box protein MAX2.